We begin with the raw amino-acid sequence, 534 residues long: Flavonoid-6-hydroxylase (534 aa).

The chain crosses the membrane as a helical span at residues 3–23; the sequence is FISFVYTLIAFSSLLYFYLIW. Heme is bound at residue Cys-467.

This sequence belongs to the cytochrome P450 family. Heme is required as a cofactor. In terms of tissue distribution, expressed in leaves.

It localises to the membrane. It carries out the reaction genkwanin + reduced [NADPH--hemoprotein reductase] + O2 = scutellarein 7-methyl ether + oxidized [NADPH--hemoprotein reductase] + H2O. The catalysed reaction is (2S)-sakuranetin + reduced [NADPH--hemoprotein reductase] + O2 = (2S)-7-methylcarthamidin + oxidized [NADPH--hemoprotein reductase] + H2O + H(+). It catalyses the reaction apigenin 4',7-dimethyl ether + reduced [NADPH--hemoprotein reductase] + O2 = ladanein + oxidized [NADPH--hemoprotein reductase] + H2O + H(+). The enzyme catalyses (2S)-naringenin 4',7-dimethyl ether + reduced [NADPH--hemoprotein reductase] + O2 = (2S)-carthamidin-4',7-dimethyl ether + oxidized [NADPH--hemoprotein reductase] + H2O + H(+). It participates in flavonoid metabolism. Its function is as follows. Hydroxylase involved in the biosynthesis of polymethoxylated flavonoids natural products such as nevadensin and salvigenin, aroma compounds which contribute to the flavor of sweet basil, and exhibit pharmacological activities such as anti-allergic, anti-oxidant, antibacterial, anti-proliferative, and anti-inflammatory effects. Catalyzes the 6-hydroxylation of 7-O-methylated precursors such as the conversion of genkwanin (GENK) to scutellarein-7-methyl ether (SCU7Me). Can also use, with a lower efficiency, apigenin-7,4'-dimethyl ether (AdM), naringenin-7-methyl ether (SAK) and naringenin-7,4'-dimethyl ether (NdM) as substrates. The chain is Flavonoid-6-hydroxylase from Ocimum basilicum (Sweet basil).